The primary structure comprises 332 residues: Tsukubadiene synthase (332 aa).

The Mg(2+) site is built by Asp75 and Glu80. The DDXXXE motif motif lies at 75-80 (DDHLDE). Arg165 lines the substrate pocket. 3 residues coordinate Mg(2+): Ser212, Ser216, and Glu220. Positions 212–220 (SDLHSFQLE) match the SXXXSXXXE motif motif. 298–299 (RY) serves as a coordination point for substrate.

This sequence belongs to the terpene synthase family. The cofactor is Mg(2+).

The catalysed reaction is (2E,6E,10E)-geranylgeranyl diphosphate = tsukubadiene + diphosphate. Functionally, catalyzes the formation of the 5-9-5 ring skeleton (3S,6S,11R,14S)-tsukubadiene from geranylgeranyl diphosphate (GGPP) via a 1,11-cyclization and a 10Re,14Re-cyclization. The protein is Tsukubadiene synthase of Streptomyces tsukubensis (strain DSM 42081 / NBRC 108919 / NRRL 18488 / 9993).